We begin with the raw amino-acid sequence, 88 residues long: Small ribosomal subunit protein bS18A (88 aa).

Belongs to the bacterial ribosomal protein bS18 family. Part of the 30S ribosomal subunit. Forms a tight heterodimer with protein bS6.

Its function is as follows. Binds as a heterodimer with protein bS6 to the central domain of the 16S rRNA, where it helps stabilize the platform of the 30S subunit. The chain is Small ribosomal subunit protein bS18A from Roseiflexus sp. (strain RS-1).